We begin with the raw amino-acid sequence, 365 residues long: tRNA N6-adenosine threonylcarbamoyltransferase (365 aa).

Positions 119 and 123 each coordinate Fe cation. Residues 141 to 145, aspartate 174, glycine 187, and asparagine 289 contribute to the substrate site; that span reads LVSGG. Residue aspartate 317 coordinates Fe cation. A disordered region spans residues 341 to 365; it reads SARPRWPLDKTSPALIGSGKKGAKA.

The protein belongs to the KAE1 / TsaD family. Fe(2+) serves as cofactor.

Its subcellular location is the cytoplasm. It carries out the reaction L-threonylcarbamoyladenylate + adenosine(37) in tRNA = N(6)-L-threonylcarbamoyladenosine(37) in tRNA + AMP + H(+). Its function is as follows. Required for the formation of a threonylcarbamoyl group on adenosine at position 37 (t(6)A37) in tRNAs that read codons beginning with adenine. Is involved in the transfer of the threonylcarbamoyl moiety of threonylcarbamoyl-AMP (TC-AMP) to the N6 group of A37, together with TsaE and TsaB. TsaD likely plays a direct catalytic role in this reaction. This is tRNA N6-adenosine threonylcarbamoyltransferase from Ruegeria sp. (strain TM1040) (Silicibacter sp.).